The following is a 687-amino-acid chain: Chloride channel protein ClC-Ka (687 aa).

A run of 4 helical transmembrane segments spans residues 52-72, 161-181, 202-222, and 236-256; these read FLMT…FALG, LFLG…AYLG, VAGA…GVLF, and YWRG…LAVF. Residues Glu-259, Glu-261, Asp-278, and Glu-281 each contribute to the Ca(2+) site. The next 6 helical transmembrane spans lie at 282 to 302, 325 to 345, 396 to 416, 417 to 437, 452 to 472, and 486 to 506; these read IFFF…YLYC, PLYA…PGVG, FTIF…LILA, TTIP…AAIG, IVAG…AGAA, and LLAF…MAVL. The Cytoplasmic portion of the chain corresponds to 507–687; it reads AANAIAQSCQ…SALTNPPPAK (181 aa). CBS domains follow at residues 551-612 and 628-686; these read MRRA…ARAS and TEPV…PPPA.

The protein belongs to the chloride channel (TC 2.A.49) family. CLCNKA subfamily. In terms of assembly, homodimer. Interacts with BSND. As to expression, expressed predominantly in the kidney.

It is found in the basolateral cell membrane. It carries out the reaction chloride(in) = chloride(out). The enzyme catalyses bromide(in) = bromide(out). The catalysed reaction is nitrate(in) = nitrate(out). It catalyses the reaction iodide(out) = iodide(in). In terms of biological role, anion-selective channel permeable to small monovalent anions with ion selectivity for chloride &gt; bromide &gt; nitrate &gt; iodide. Forms a homodimeric channel where each subunit has its own ion conduction pathway. May conduct double-barreled currents controlled by two types of gates, two fast gates that control each subunit independently and a slow common gate that opens and shuts off both subunits simultaneously. Assembles with the regulatory subunit BSND/Barttin for sorting at the basolateral plasma membrane domain and functional switch to the ion conducting state. CLCNKA:BSND channels display mostly a linear current-voltage relationship with fast gating at negative potentials. Mediates transepithelial chloride transport from the lumen to interstitial compartment along the thin ascending limb of Henle's loop, contributing to generation of hypertonic medullary interstitium as a countercurrent system to achieve urine concentration. Conducts chloride currents in the stria vascularis of the inner ear to establish the endocochlear potential necessary for normal hearing. The sequence is that of Chloride channel protein ClC-Ka (CLCNKA) from Oryctolagus cuniculus (Rabbit).